The primary structure comprises 241 residues: Cobalt transport protein CbiM (241 aa).

A signal peptide spans 1–23 (MKKNLTFFMVIALLFTITPNVYA). 6 helical membrane passes run 29 to 49 (GFLPPMWSGVYFVISAPFIII), 66 to 86 (MLLGLVAAYAFILSAMKIPSV), 98 to 118 (LSAIIFGPFISAIVGLIVLIF), 121 to 141 (ILLAHGGITTLGANTLSMGIM), 160 to 180 (VAVFLAATLGDLFTYFITSVQ), and 202 to 222 (IFSITQIPLAIMEGILTVIIF).

The protein belongs to the CbiM family. Forms an energy-coupling factor (ECF) transporter complex composed of an ATP-binding protein (A component, CbiO), a transmembrane protein (T component, CbiQ) and 2 possible substrate-capture proteins (S components, CbiM and CbiN) of unknown stoichimetry.

The protein localises to the cell membrane. It functions in the pathway cofactor biosynthesis; adenosylcobalamin biosynthesis. Part of the energy-coupling factor (ECF) transporter complex CbiMNOQ involved in cobalt import. This is Cobalt transport protein CbiM from Clostridium tetani (strain Massachusetts / E88).